A 253-amino-acid chain; its full sequence is Testis-expressed protein 47 (253 aa).

The sequence is that of Testis-expressed protein 47 from Rattus norvegicus (Rat).